The primary structure comprises 283 residues: ATP phosphoribosyltransferase (283 aa).

It belongs to the ATP phosphoribosyltransferase family. Long subfamily. Requires Mg(2+) as cofactor.

The protein localises to the cytoplasm. The catalysed reaction is 1-(5-phospho-beta-D-ribosyl)-ATP + diphosphate = 5-phospho-alpha-D-ribose 1-diphosphate + ATP. Its pathway is amino-acid biosynthesis; L-histidine biosynthesis; L-histidine from 5-phospho-alpha-D-ribose 1-diphosphate: step 1/9. With respect to regulation, feedback inhibited by histidine. Its function is as follows. Catalyzes the condensation of ATP and 5-phosphoribose 1-diphosphate to form N'-(5'-phosphoribosyl)-ATP (PR-ATP). Has a crucial role in the pathway because the rate of histidine biosynthesis seems to be controlled primarily by regulation of HisG enzymatic activity. The polypeptide is ATP phosphoribosyltransferase (Bifidobacterium longum (strain DJO10A)).